The sequence spans 315 residues: Protein sprouty homolog 2 (315 aa).

Residues 1–15 (MEARAQSGNGSQPLL) are compositionally biased toward polar residues. Disordered stretches follow at residues 1–39 (MEAR…QQVH) and 51–140 (NTNE…GSSF). Positions 20-32 (DGGRQRGEPDPRD) are enriched in basic and acidic residues. Residues 108-140 (SRSISTVSSGSRSSTRTSTSSSSSEQRLLGSSF) show a composition bias toward low complexity. The required for interaction with CAV1 stretch occupies residues 118–315 (SRSSTRTSTS…VPPRNFEKPT (198 aa)). One can recognise an SPR domain in the interval 177-291 (RCEDCGKCKC…CYDRVNRPGC (115 aa)). The interval 178 to 315 (CEDCGKCKCK…VPPRNFEKPT (138 aa)) is required for interaction with TESK1.

Belongs to the sprouty family. As to quaternary structure, forms heterodimers with SPRY1. Forms a tripartite complex containing GAB1, METTL13 and SPRY2. Within the complex interacts with METTL13. Interacts with RAF1. Interacts (via C-terminus) with TESK1 (via C-terminus); the interaction disrupts SPRY2 interaction with GRB2, potentially via disruption of SPRY2 serine dephosphorylation. Interacts with PPP2R1A/PP2A-A and PPP2CA/PP2A-C; the interaction with PPP2CA/PP2A-C is inhibited by interaction with TESK1, possibly by vesicular sequestration of SPRY2. Inhibition of the interaction with the serine/threonine-protein phosphatase 2A (PP2A) holoenzyme results in loss of PP2A-mediated dephosphorylation, resulting in the loss of SPRY2 interaction with GRB2. Interacts with GRB2. Interacts with CBL/C-CBL; the interaction inhibits CBL-mediated ubiquitination of EGFR. Interacts (via C-terminus) with CAV1 (via C-terminus). Cleaved at Pro-144 by the prolyl endopeptidase FAP (seprase) activity (in vitro).

It is found in the cytoplasm. The protein resides in the cytoskeleton. The protein localises to the cell projection. Its subcellular location is the ruffle membrane. In terms of biological role, antagonist of fibroblast growth factor (FGF) pathways via inhibition of FGF-mediated phosphorylation of ERK1/2. Thereby acts as an antagonist of FGF-induced retinal lens fiber differentiation, may inhibit limb bud outgrowth and may negatively modulate respiratory organogenesis. Inhibits TGFB-induced epithelial-to-mesenchymal transition in retinal lens epithelial cells. Inhibits CBL/C-CBL-mediated EGFR ubiquitination. The chain is Protein sprouty homolog 2 (SPRY2) from Macaca fascicularis (Crab-eating macaque).